The following is a 343-amino-acid chain: Protein RecA (343 aa).

An ATP-binding site is contributed by 64 to 71 (GPESSGKT).

The protein belongs to the RecA family.

The protein resides in the cytoplasm. Its function is as follows. Can catalyze the hydrolysis of ATP in the presence of single-stranded DNA, the ATP-dependent uptake of single-stranded DNA by duplex DNA, and the ATP-dependent hybridization of homologous single-stranded DNAs. It interacts with LexA causing its activation and leading to its autocatalytic cleavage. This chain is Protein RecA, found in Bacillus thuringiensis (strain Al Hakam).